Consider the following 204-residue polypeptide: Urease accessory protein UreG (204 aa).

13–20 (GPVGSGKT) contributes to the GTP binding site.

The protein belongs to the SIMIBI class G3E GTPase family. UreG subfamily. Homodimer. UreD, UreF and UreG form a complex that acts as a GTP-hydrolysis-dependent molecular chaperone, activating the urease apoprotein by helping to assemble the nickel containing metallocenter of UreC. The UreE protein probably delivers the nickel.

It localises to the cytoplasm. Its function is as follows. Facilitates the functional incorporation of the urease nickel metallocenter. This process requires GTP hydrolysis, probably effectuated by UreG. The chain is Urease accessory protein UreG from Acinetobacter baylyi (strain ATCC 33305 / BD413 / ADP1).